The following is a 250-amino-acid chain: Ditrans,polycis-undecaprenyl-diphosphate synthase ((2E,6E)-farnesyl-diphosphate specific) (250 aa).

The active site involves D20. D20 contributes to the Mg(2+) binding site. Substrate contacts are provided by residues 21-24, W25, R33, H37, and 65-67; these read GNGR and SSE. N68 acts as the Proton acceptor in catalysis. Residues W69, R71, R188, and 194-196 contribute to the substrate site; that span reads RIS. Residue E207 participates in Mg(2+) binding.

The protein belongs to the UPP synthase family. As to quaternary structure, homodimer. It depends on Mg(2+) as a cofactor.

The catalysed reaction is 8 isopentenyl diphosphate + (2E,6E)-farnesyl diphosphate = di-trans,octa-cis-undecaprenyl diphosphate + 8 diphosphate. Its function is as follows. Catalyzes the sequential condensation of isopentenyl diphosphate (IPP) with (2E,6E)-farnesyl diphosphate (E,E-FPP) to yield (2Z,6Z,10Z,14Z,18Z,22Z,26Z,30Z,34E,38E)-undecaprenyl diphosphate (di-trans,octa-cis-UPP). UPP is the precursor of glycosyl carrier lipid in the biosynthesis of bacterial cell wall polysaccharide components such as peptidoglycan and lipopolysaccharide. The sequence is that of Ditrans,polycis-undecaprenyl-diphosphate synthase ((2E,6E)-farnesyl-diphosphate specific) from Vibrio cholerae serotype O1 (strain ATCC 39315 / El Tor Inaba N16961).